The chain runs to 147 residues: Globin (147 aa).

At Ser-2 the chain carries N-acetylserine. Residues 2 to 147 (SLSAAEADLA…IIDALKAAGK (146 aa)) form the Globin domain. His-96 contributes to the heme b binding site.

Belongs to the globin family. Monomer.

This chain is Globin, found in Aplysia limacina (Sea hare).